Consider the following 284-residue polypeptide: Putative thiosulfate sulfurtransferase SseB (284 aa).

Rhodanese domains are found at residues 20 to 138 (AGDP…SIET) and 169 to 280 (GAGG…RPVG). A substrate-binding site is contributed by R183. The active-site Cysteine persulfide intermediate is C241.

The enzyme catalyses thiosulfate + hydrogen cyanide = thiocyanate + sulfite + 2 H(+). This chain is Putative thiosulfate sulfurtransferase SseB (sseB), found in Mycobacterium tuberculosis (strain CDC 1551 / Oshkosh).